Consider the following 154-residue polypeptide: UPF0756 membrane protein RBAM_026200 (154 aa).

The next 4 helical transmembrane spans lie at 14 to 34, 54 to 74, 87 to 107, and 117 to 137; these read AIAL…LIVI, WGVT…DIGF, WIAL…LTLL, and LVIG…GPLI.

This sequence belongs to the UPF0756 family.

The protein localises to the cell membrane. In Bacillus velezensis (strain DSM 23117 / BGSC 10A6 / LMG 26770 / FZB42) (Bacillus amyloliquefaciens subsp. plantarum), this protein is UPF0756 membrane protein RBAM_026200.